Consider the following 181-residue polypeptide: ATP synthase subunit delta (181 aa).

Belongs to the ATPase delta chain family. In terms of assembly, F-type ATPases have 2 components, F(1) - the catalytic core - and F(0) - the membrane proton channel. F(1) has five subunits: alpha(3), beta(3), gamma(1), delta(1), epsilon(1). F(0) has three main subunits: a(1), b(2) and c(10-14). The alpha and beta chains form an alternating ring which encloses part of the gamma chain. F(1) is attached to F(0) by a central stalk formed by the gamma and epsilon chains, while a peripheral stalk is formed by the delta and b chains.

The protein resides in the cell membrane. Its function is as follows. F(1)F(0) ATP synthase produces ATP from ADP in the presence of a proton or sodium gradient. F-type ATPases consist of two structural domains, F(1) containing the extramembraneous catalytic core and F(0) containing the membrane proton channel, linked together by a central stalk and a peripheral stalk. During catalysis, ATP synthesis in the catalytic domain of F(1) is coupled via a rotary mechanism of the central stalk subunits to proton translocation. This protein is part of the stalk that links CF(0) to CF(1). It either transmits conformational changes from CF(0) to CF(1) or is implicated in proton conduction. This chain is ATP synthase subunit delta, found in Priestia megaterium (strain ATCC 12872 / QMB1551) (Bacillus megaterium).